The primary structure comprises 3535 residues: Lysosomal-trafficking regulator (3535 aa).

Residues methionine 412 to glutamine 436 are disordered. A WD 1 repeat occupies threonine 689–glutamate 736. Residues serine 1066–serine 1096 show a composition bias toward polar residues. 2 disordered regions span residues serine 1066 to valine 1132 and glycine 1592 to glycine 1613. Residues proline 1596–threonine 1610 show a composition bias toward low complexity. The region spanning serine 2686–valine 2784 is the BEACH-type PH domain. The BEACH domain occupies valine 2784 to serine 3081. The segment at glycine 3254–glycine 3287 is disordered. The segment covering serine 3273 to serine 3285 has biased composition (low complexity). WD repeat units lie at residues arginine 3307 to threonine 3346, valine 3442 to glutamate 3486, and threonine 3489 to proline 3527.

In terms of assembly, interacts with Rab5; the interaction is independent of GDP or GTP. Interacts with msps.

It localises to the vesicle. Its subcellular location is the cytoplasm. The protein resides in the cytoskeleton. The protein localises to the spindle. It is found in the spindle pole. In terms of biological role, adapter protein that regulates intracellular membrane fusion reactions. Regulates the fusion of lysosome-related organelles. Promotes microtubules nucleation and centrosomal recruitment of microtubule nucleating proteins such as msps. In syncytial embryos, during the formation of yolk granules, suppresses vesicle fusion events with lipid droplets, possibly via interaction with Rab5. In the eye, regulates pigment granules size. In hemocytes, required for the late steps of bacteria phagocytosis. In fat body, required for autophagosome maturation. The sequence is that of Lysosomal-trafficking regulator from Drosophila melanogaster (Fruit fly).